We begin with the raw amino-acid sequence, 175 residues long: NADH-ubiquinone oxidoreductase chain 6 (175 aa).

5 helical membrane passes run 1 to 21 (MMTY…VGFS), 27 to 47 (VYGG…IMNF), 49 to 69 (GSFL…VVFG), 88 to 108 (VVFG…LYVL), and 149 to 169 (YGMW…VVVM).

Belongs to the complex I subunit 6 family. In terms of assembly, core subunit of respiratory chain NADH dehydrogenase (Complex I) which is composed of 45 different subunits.

It localises to the mitochondrion inner membrane. The enzyme catalyses a ubiquinone + NADH + 5 H(+)(in) = a ubiquinol + NAD(+) + 4 H(+)(out). In terms of biological role, core subunit of the mitochondrial membrane respiratory chain NADH dehydrogenase (Complex I) which catalyzes electron transfer from NADH through the respiratory chain, using ubiquinone as an electron acceptor. Essential for the catalytic activity and assembly of complex I. The protein is NADH-ubiquinone oxidoreductase chain 6 (MT-ND6) of Pteropus scapulatus (Little red flying fox).